The primary structure comprises 450 residues: Tubulin alpha chain, testis-specific (450 aa).

Positions 1-4 match the MREC motif motif; it reads MREC. Gln-11 contributes to the GTP binding site. Lys-40 is modified (N6-acetyllysine). The GTP site is built by Glu-71, Ser-140, Gly-144, Thr-145, Thr-179, Asn-206, and Asn-228. Glu-71 is a binding site for Mg(2+). Glu-254 is a catalytic residue.

The protein belongs to the tubulin family. Dimer of alpha and beta chains. A typical microtubule is a hollow water-filled tube with an outer diameter of 25 nm and an inner diameter of 15 nM. Alpha-beta heterodimers associate head-to-tail to form protofilaments running lengthwise along the microtubule wall with the beta-tubulin subunit facing the microtubule plus end conferring a structural polarity. Microtubules usually have 13 protofilaments but different protofilament numbers can be found in some organisms and specialized cells. Requires Mg(2+) as cofactor. Some glutamate residues at the C-terminus are polyglycylated, resulting in polyglycine chains on the gamma-carboxyl group. Glycylation is mainly limited to tubulin incorporated into axonemes (cilia and flagella) whereas glutamylation is prevalent in neuronal cells, centrioles, axonemes, and the mitotic spindle. Both modifications can coexist on the same protein on adjacent residues, and lowering polyglycylation levels increases polyglutamylation, and reciprocally. The precise function of polyglycylation is still unclear. Post-translationally, some glutamate residues at the C-terminus are polyglutamylated, resulting in polyglutamate chains on the gamma-carboxyl group. Polyglutamylation plays a key role in microtubule severing by spastin (SPAST). SPAST preferentially recognizes and acts on microtubules decorated with short polyglutamate tails: severing activity by SPAST increases as the number of glutamates per tubulin rises from one to eight, but decreases beyond this glutamylation threshold. In terms of processing, acetylation of alpha chains at Lys-40 is located inside the microtubule lumen. This modification has been correlated with increased microtubule stability, intracellular transport and ciliary assembly. Undergoes a tyrosination/detyrosination cycle, the cyclic removal and re-addition of a C-terminal tyrosine residue by the enzymes tubulin tyrosine carboxypeptidase (MATCAP, VASH1 or VASH2) and tubulin tyrosine ligase (TTL), respectively. Post-translationally, tyrosination promotes microtubule interaction with CAP-Gly microtubule plus-end tracking proteins. Tyrosinated tubulins regulate the initiation of dynein-driven motility. In terms of processing, detyrosination is involved in metaphase plate congression by guiding chromosomes during mitosis. Detyrosination increases microtubules-dependent mechanotransduction in dystrophic cardiac and skeletal muscle. In cardiomyocytes, detyrosinated microtubules are required to resist to contractile compression during contraction. Testis specific.

The protein resides in the cytoplasm. It localises to the cytoskeleton. It catalyses the reaction GTP + H2O = GDP + phosphate + H(+). Functionally, tubulin is the major constituent of microtubules, a cylinder consisting of laterally associated linear protofilaments composed of alpha- and beta-tubulin heterodimers. Microtubules grow by the addition of GTP-tubulin dimers to the microtubule end, where a stabilizing cap forms. Below the cap, tubulin dimers are in GDP-bound state, owing to GTPase activity of alpha-tubulin. The polypeptide is Tubulin alpha chain, testis-specific (Oncorhynchus mykiss (Rainbow trout)).